The chain runs to 273 residues: Putative pyruvate, phosphate dikinase regulatory protein (273 aa).

153-160 (GVSRTSKS) contributes to the ADP binding site.

The protein belongs to the pyruvate, phosphate/water dikinase regulatory protein family. PDRP subfamily.

It carries out the reaction N(tele)-phospho-L-histidyl/L-threonyl-[pyruvate, phosphate dikinase] + ADP = N(tele)-phospho-L-histidyl/O-phospho-L-threonyl-[pyruvate, phosphate dikinase] + AMP + H(+). The catalysed reaction is N(tele)-phospho-L-histidyl/O-phospho-L-threonyl-[pyruvate, phosphate dikinase] + phosphate + H(+) = N(tele)-phospho-L-histidyl/L-threonyl-[pyruvate, phosphate dikinase] + diphosphate. Functionally, bifunctional serine/threonine kinase and phosphorylase involved in the regulation of the pyruvate, phosphate dikinase (PPDK) by catalyzing its phosphorylation/dephosphorylation. This Ehrlichia canis (strain Jake) protein is Putative pyruvate, phosphate dikinase regulatory protein.